Consider the following 360-residue polypeptide: MKTERVNVNVNNQPYPIYIGENLLQDKSLLQRHVKGRQVMIVSNETIAAFYLDPLKAIYQDFQCDTFILPDGEQYKTLEYWEHILHKLASCNHHRDTTLIALGGGVVGDITGFAAACYQRGVDFIQVPTTLLAQVDASIGGKTAVNHPVGKNLIGAFHQPKAVIIDLNTLNTLPEREFKAGMAEIVKAALIKDEKFFTDLENKMSDLLQRNFIFLQAVIKRAAEIKRDIVNADEKERSGERALLNLGHTFAHAIERLLGYGQWLHGEAVSAGLVLAAQLSHRKNLLDFESLQRICRLLTQISLPIHFPKSINADELLSAMYMDKKVANERLHLILLEDLGHAVVSDQVDDRELKSFLENG.

NAD(+) is bound by residues 71 to 76 (DGEQYK), 105 to 109 (GVVGD), 129 to 130 (TT), Lys-142, Lys-151, and 169 to 172 (TLNT). Zn(2+) contacts are provided by Glu-184, His-248, and His-265.

The protein belongs to the sugar phosphate cyclases superfamily. Dehydroquinate synthase family. Requires Co(2+) as cofactor. It depends on Zn(2+) as a cofactor. NAD(+) serves as cofactor.

The protein localises to the cytoplasm. The enzyme catalyses 7-phospho-2-dehydro-3-deoxy-D-arabino-heptonate = 3-dehydroquinate + phosphate. It functions in the pathway metabolic intermediate biosynthesis; chorismate biosynthesis; chorismate from D-erythrose 4-phosphate and phosphoenolpyruvate: step 2/7. Its function is as follows. Catalyzes the conversion of 3-deoxy-D-arabino-heptulosonate 7-phosphate (DAHP) to dehydroquinate (DHQ). The polypeptide is 3-dehydroquinate synthase (Coxiella burnetii (strain RSA 331 / Henzerling II)).